The following is a 320-amino-acid chain: GTP 3',8-cyclase (320 aa).

The region spanning 5–222 (KLSRPLKVLR…LMKKEFTFYP (218 aa)) is the Radical SAM core domain. Arg-14 provides a ligand contact to GTP. The [4Fe-4S] cluster site is built by Cys-21, Cys-25, and Cys-28. Arg-65 provides a ligand contact to GTP. S-adenosyl-L-methionine is bound at residue Gly-69. Thr-96 serves as a coordination point for GTP. Residue Ser-120 coordinates S-adenosyl-L-methionine. Lys-157 provides a ligand contact to GTP. S-adenosyl-L-methionine is bound at residue Met-191. Residues Cys-253 and Cys-256 each coordinate [4Fe-4S] cluster. GTP is bound at residue 258–260 (RIR). Residue Cys-270 participates in [4Fe-4S] cluster binding.

It belongs to the radical SAM superfamily. MoaA family. In terms of assembly, monomer and homodimer. It depends on [4Fe-4S] cluster as a cofactor.

It catalyses the reaction GTP + AH2 + S-adenosyl-L-methionine = (8S)-3',8-cyclo-7,8-dihydroguanosine 5'-triphosphate + 5'-deoxyadenosine + L-methionine + A + H(+). It functions in the pathway cofactor biosynthesis; molybdopterin biosynthesis. Functionally, catalyzes the cyclization of GTP to (8S)-3',8-cyclo-7,8-dihydroguanosine 5'-triphosphate. This chain is GTP 3',8-cyclase, found in Aquifex aeolicus (strain VF5).